We begin with the raw amino-acid sequence, 373 residues long: Leucine aminopeptidase 1 (373 aa).

An N-terminal signal peptide occupies residues methionine 1–glycine 18. N-linked (GlcNAc...) asparagine glycosylation is present at asparagine 136. The Zn(2+) site is built by histidine 176 and aspartate 195. An N-linked (GlcNAc...) asparagine glycan is attached at asparagine 196. Positions 234 and 261 each coordinate Zn(2+). The N-linked (GlcNAc...) asparagine glycan is linked to asparagine 284. A disulfide bond links cysteine 310 and cysteine 314. Histidine 343 is a Zn(2+) binding site.

It belongs to the peptidase M28 family. M28E subfamily. As to quaternary structure, monomer. Zn(2+) serves as cofactor.

It is found in the secreted. Its function is as follows. Extracellular aminopeptidase which contributes to pathogenicity. The sequence is that of Leucine aminopeptidase 1 (LAP1) from Trichophyton equinum (Horse ringworm fungus).